Here is a 233-residue protein sequence, read N- to C-terminus: C-type lectin domain family 2 member D6 (233 aa).

Positions 1–45 (MPSSAHLQDSPPLLSRTLTQNEGQTSLRQSSSCGPSATSASESLS) are disordered. The Cytoplasmic segment spans residues 1–73 (MPSSAHLQDS…GIILPESPAK (73 aa)). The segment covering 16–29 (RTLTQNEGQTSLRQ) has biased composition (polar residues). Residues 30–43 (SSSCGPSATSASES) are compositionally biased toward low complexity. The helical; Signal-anchor for type II membrane protein transmembrane segment at 74–94 (LLCCCAVIVVLSVAVVALSVA) threads the bilayer. The Extracellular segment spans residues 95-233 (LSVKKTPQIS…KLNSYTSQCQ (139 aa)). The C-type lectin domain occupies 119-230 (VGNKCYYFNE…ICSKLNSYTS (112 aa)). N-linked (GlcNAc...) asparagine glycosylation is present at asparagine 132.

The protein localises to the cell membrane. Functionally, lectin-type cell surface receptor. This chain is C-type lectin domain family 2 member D6 (Clec2d6), found in Rattus norvegicus (Rat).